We begin with the raw amino-acid sequence, 635 residues long: Threonine--tRNA ligase (635 aa).

Residues 1-62 (MITITLPDGS…EHDAMLRIIT (62 aa)) enclose the TGS domain. A catalytic region spans residues 244-535 (DHRKIGKVQD…LIEHYAGIWP (292 aa)). Residues Cys-335, His-386, and His-512 each coordinate Zn(2+).

The protein belongs to the class-II aminoacyl-tRNA synthetase family. Homodimer. The cofactor is Zn(2+).

It is found in the cytoplasm. The enzyme catalyses tRNA(Thr) + L-threonine + ATP = L-threonyl-tRNA(Thr) + AMP + diphosphate + H(+). Functionally, catalyzes the attachment of threonine to tRNA(Thr) in a two-step reaction: L-threonine is first activated by ATP to form Thr-AMP and then transferred to the acceptor end of tRNA(Thr). Also edits incorrectly charged L-seryl-tRNA(Thr). The sequence is that of Threonine--tRNA ligase from Xylella fastidiosa (strain 9a5c).